The sequence spans 887 residues: Probable dual specificity protein kinase madd-3 (887 aa).

5 disordered regions span residues 77–147 (PIKS…ISAA), 163–299 (AQPP…PKAL), 313–333 (LPQS…STGG), 347–475 (TTIC…KSAA), and 504–533 (RKPS…QHQD). The segment covering 108–118 (PTQNPVQLPLP) has biased composition (low complexity). Residues 121 to 130 (VSEKPGDKKS) show a composition bias toward basic and acidic residues. The span at 177–192 (SETNSGSGPVSKQVSG) shows a compositional bias: polar residues. Positions 217-241 (SSASTRAKAASAVAPEANPAPVPTA) are enriched in low complexity. 2 stretches are compositionally biased toward polar residues: residues 314 to 332 (PQSS…TSTG) and 356 to 366 (NVPSTSQPQQG). Residues 367–377 (DNEKRLIEKKL) show a composition bias toward basic and acidic residues. Low complexity predominate over residues 407-419 (LSSNLTTTNNNNN). The span at 439–462 (FSTQAGSGNATTVDDPASTTTSKE) shows a compositional bias: polar residues. Positions 551–863 (FTIYDTLGEG…LPEALQHRYF (313 aa)) constitute a Protein kinase domain. ATP is bound by residues 557-565 (LGEGTFGKV) and Lys-580. The Proton acceptor role is filled by Asp-677.

This sequence belongs to the protein kinase superfamily. CMGC Ser/Thr protein kinase family. Lammer subfamily. In terms of tissue distribution, expressed in body wall, vulval and anal depressor muscles.

The protein resides in the cytoplasm. The protein localises to the nucleus. Functionally, probable dual specificity kinase acting on both serine/threonine and tyrosine-containing substrates. Negatively regulates p38 MAPK signaling to allow for the plasma membrane of body wall muscle cells to form projections, also called muscle arms, that extend and connect the body wall muscles to target motor neurons. Negative regulation of p38 MAPK signaling may in turn modulate the trafficking of the muscle specific receptor eva-1 to the lysosome, to ensure proper display of the eva-1 receptor on the plasma membrane of muscle cells and allow for muscle arm extension towards guidance cues. The chain is Probable dual specificity protein kinase madd-3 from Caenorhabditis elegans.